The primary structure comprises 672 residues: Nuclear RNA export factor 1 (672 aa).

Disordered stretches follow at residues 1–52 (MPKR…SFKP) and 73–101 (DEDDDMSDMTTAVKDRPTSRRRGSPIPRG). Basic residues predominate over residues 40–49 (RKDRNKRRVS). Residues 113–193 (WYQVTLQNAQ…PRVRSGIPLV (81 aa)) enclose the RRM domain. 4 LRR repeats span residues 255–280 (DLEALNLNDNSISSMEAFKGVEKRLP), 281–304 (NLKILYLGDNKIPSLAHLVVLRNL), 305–332 (SILELVLKNNPCRSRYKDSQQFISEVRR), and 333–360 (KFPKLVKLDGETLEPQITFDLSEQGRLL). In terms of domain architecture, NTF2 spans 375–529 (VVRQFLDQYF…FCIRNETIFI (155 aa)). A disordered region spans residues 541–564 (KRSQHQPAPGAMPSTSSAVTSPQA). Residues 553–563 (PSTSSAVTSPQ) show a composition bias toward polar residues. Serine 561 is modified (phosphoserine). In terms of domain architecture, TAP-C spans 618-672 (STKMQMIEAMSAQSQMNVIWSRKCLEETNWDFNHAAFVFEKLFKENKIPPEAFMK).

Belongs to the NXF family. In terms of assembly, interacts with Nxt1. Interacts with ZC3H3. Forms a complex with Nup358/RanBP2, RanGAP and Nxt1. Interacts with Nup54 and Nup58. Interacts with Orc3 and Hpr1. In terms of tissue distribution, expressed ubiquitously.

It is found in the nucleus. Its subcellular location is the nucleoplasm. The protein resides in the cytoplasm. It localises to the nucleus envelope. In terms of biological role, mediates the export of the majority of mRNAs from the nucleus to the cytoplasm. In ovarian follicle cells, plays a role in transposable element silencing regulation by enabling the nuclear export of flamenco (flam) transcripts and subsequent piRNA biogenesis. This chain is Nuclear RNA export factor 1, found in Drosophila melanogaster (Fruit fly).